The following is a 439-amino-acid chain: D-inositol 3-phosphate glycosyltransferase (439 aa).

Position 21 (His21) interacts with 1D-myo-inositol 3-phosphate. UDP-N-acetyl-alpha-D-glucosamine is bound by residues 27 to 28 (QP) and Gly35. Residues 32 to 37 (DAGGMN), Lys90, Tyr123, Thr147, and Arg167 contribute to the 1D-myo-inositol 3-phosphate site. UDP-N-acetyl-alpha-D-glucosamine is bound by residues Arg241, Lys246, and Gln299. Tyr308, Arg309, and Ala311 together coordinate Mg(2+). UDP-N-acetyl-alpha-D-glucosamine contacts are provided by Glu321 and Glu329. Thr335 serves as a coordination point for Mg(2+).

This sequence belongs to the glycosyltransferase group 1 family. MshA subfamily. As to quaternary structure, homodimer.

The enzyme catalyses 1D-myo-inositol 3-phosphate + UDP-N-acetyl-alpha-D-glucosamine = 1D-myo-inositol 2-acetamido-2-deoxy-alpha-D-glucopyranoside 3-phosphate + UDP + H(+). Functionally, catalyzes the transfer of a N-acetyl-glucosamine moiety to 1D-myo-inositol 3-phosphate to produce 1D-myo-inositol 2-acetamido-2-deoxy-glucopyranoside 3-phosphate in the mycothiol biosynthesis pathway. In Mycobacterium sp. (strain JLS), this protein is D-inositol 3-phosphate glycosyltransferase.